Consider the following 32-residue polypeptide: Ovostatin (32 aa).

The segment at residues C27–Q30 is a cross-link (isoglutamyl cysteine thioester (Cys-Gln)).

The protein belongs to the protease inhibitor I39 (alpha-2-macroglobulin) family. As to quaternary structure, homotetramer, which consists of two pairs of disulfide-linked chains.

Its subcellular location is the secreted. Functionally, is able to inhibit all four classes of proteinases by a unique 'trapping' mechanism. This protein has a peptide stretch, called the 'bait region' which contains specific cleavage sites for different proteinases. When a proteinase cleaves the bait region, a conformational change is induced in the protein which traps the proteinase. The entrapped enzyme remains active against low molecular weight substrates (activity against high molecular weight substrates is greatly reduced). Following cleavage in the bait region a thioester bond is hydrolyzed and mediates the covalent binding of the protein to the proteinase. The chain is Ovostatin from Anas platyrhynchos (Mallard).